We begin with the raw amino-acid sequence, 296 residues long: Cytidine deaminase (296 aa).

CMP/dCMP-type deaminase domains are found at residues 48–168 (DADA…FGPV) and 187–296 (QNMN…FIEE). Residue 89–91 (NME) coordinates substrate. Zn(2+) is bound at residue H102. The Proton donor role is filled by E104. Zn(2+) contacts are provided by C129 and C132.

Belongs to the cytidine and deoxycytidylate deaminase family. Homodimer. Requires Zn(2+) as cofactor.

It catalyses the reaction cytidine + H2O + H(+) = uridine + NH4(+). The enzyme catalyses 2'-deoxycytidine + H2O + H(+) = 2'-deoxyuridine + NH4(+). Functionally, this enzyme scavenges exogenous and endogenous cytidine and 2'-deoxycytidine for UMP synthesis. In Pectobacterium carotovorum subsp. carotovorum (strain PC1), this protein is Cytidine deaminase.